We begin with the raw amino-acid sequence, 394 residues long: Elongation factor Tu (394 aa).

The tr-type G domain occupies 10–204 (KPHVNVGTIG…AMDDYIPAPE (195 aa)). Positions 19 to 26 (GHVDHGKT) are G1. 19-26 (GHVDHGKT) lines the GTP pocket. Residue Thr26 participates in Mg(2+) binding. Positions 60–64 (GITIN) are G2. Positions 81-84 (DCPG) are G3. GTP is bound by residues 81–85 (DCPGH) and 136–139 (NKCD). A G4 region spans residues 136-139 (NKCD). Positions 174-176 (SAL) are G5.

This sequence belongs to the TRAFAC class translation factor GTPase superfamily. Classic translation factor GTPase family. EF-Tu/EF-1A subfamily. Monomer.

Its subcellular location is the cytoplasm. The enzyme catalyses GTP + H2O = GDP + phosphate + H(+). Functionally, GTP hydrolase that promotes the GTP-dependent binding of aminoacyl-tRNA to the A-site of ribosomes during protein biosynthesis. This Francisella tularensis subsp. holarctica (strain FTNF002-00 / FTA) protein is Elongation factor Tu.